A 380-amino-acid chain; its full sequence is 4-hydroxy-3-methylbut-2-en-1-yl diphosphate synthase (flavodoxin) (380 aa).

Positions 279, 282, 314, and 321 each coordinate [4Fe-4S] cluster.

It belongs to the IspG family. The cofactor is [4Fe-4S] cluster.

The catalysed reaction is (2E)-4-hydroxy-3-methylbut-2-enyl diphosphate + oxidized [flavodoxin] + H2O + 2 H(+) = 2-C-methyl-D-erythritol 2,4-cyclic diphosphate + reduced [flavodoxin]. It functions in the pathway isoprenoid biosynthesis; isopentenyl diphosphate biosynthesis via DXP pathway; isopentenyl diphosphate from 1-deoxy-D-xylulose 5-phosphate: step 5/6. Its function is as follows. Converts 2C-methyl-D-erythritol 2,4-cyclodiphosphate (ME-2,4cPP) into 1-hydroxy-2-methyl-2-(E)-butenyl 4-diphosphate. The protein is 4-hydroxy-3-methylbut-2-en-1-yl diphosphate synthase (flavodoxin) of Tropheryma whipplei (strain TW08/27) (Whipple's bacillus).